Reading from the N-terminus, the 111-residue chain is Nucleoid-associated protein Teth39_2199 (111 aa).

This sequence belongs to the YbaB/EbfC family. In terms of assembly, homodimer.

The protein localises to the cytoplasm. Its subcellular location is the nucleoid. In terms of biological role, binds to DNA and alters its conformation. May be involved in regulation of gene expression, nucleoid organization and DNA protection. This is Nucleoid-associated protein Teth39_2199 from Thermoanaerobacter pseudethanolicus (strain ATCC 33223 / 39E) (Clostridium thermohydrosulfuricum).